The following is a 363-amino-acid chain: Probable dual-specificity RNA methyltransferase RlmN (363 aa).

The active-site Proton acceptor is E99. Residues 105-341 form the Radical SAM core domain; sequence SENRMTACVS…VTVRKSHGAS (237 aa). C112 and C346 are joined by a disulfide. [4Fe-4S] cluster contacts are provided by C119, C123, and C126. S-adenosyl-L-methionine contacts are provided by residues 171 to 172, S204, 227 to 229, and N303; these read GE and SLH. Catalysis depends on C346, which acts as the S-methylcysteine intermediate.

It belongs to the radical SAM superfamily. RlmN family. It depends on [4Fe-4S] cluster as a cofactor.

The protein localises to the cytoplasm. The catalysed reaction is adenosine(2503) in 23S rRNA + 2 reduced [2Fe-2S]-[ferredoxin] + 2 S-adenosyl-L-methionine = 2-methyladenosine(2503) in 23S rRNA + 5'-deoxyadenosine + L-methionine + 2 oxidized [2Fe-2S]-[ferredoxin] + S-adenosyl-L-homocysteine. It catalyses the reaction adenosine(37) in tRNA + 2 reduced [2Fe-2S]-[ferredoxin] + 2 S-adenosyl-L-methionine = 2-methyladenosine(37) in tRNA + 5'-deoxyadenosine + L-methionine + 2 oxidized [2Fe-2S]-[ferredoxin] + S-adenosyl-L-homocysteine. Its function is as follows. Specifically methylates position 2 of adenine 2503 in 23S rRNA and position 2 of adenine 37 in tRNAs. This chain is Probable dual-specificity RNA methyltransferase RlmN, found in Chlorobium phaeobacteroides (strain DSM 266 / SMG 266 / 2430).